A 322-amino-acid polypeptide reads, in one-letter code: Secreted RxLR effector protein RXLR-C17 (322 aa).

A signal peptide spans 1–25 (MREPAFSFRLHLFAAMILLVDVFSA). The short motif at 43 to 62 (RQLRARDSQAKNYVIRDEER) is the RxLR-dEER element. An N-linked (GlcNAc...) asparagine glycan is attached at Asn73.

It belongs to the RxLR effector family.

It is found in the secreted. It localises to the host cytoplasm. The protein resides in the host nucleus. Its function is as follows. Secreted effector that suppresses pattern-triggered immunity (PTI) in plant host. This is Secreted RxLR effector protein RXLR-C17 from Plasmopara halstedii (Downy mildew of sunflower).